Here is a 382-residue protein sequence, read N- to C-terminus: Dual-specificity RNA methyltransferase RlmN (382 aa).

The active-site Proton acceptor is the Glu91. The Radical SAM core domain occupies 97–339; it reads ETDRGTLCIS…TTVRKTRGDD (243 aa). Residues Cys104 and Cys344 are joined by a disulfide bond. Residues Cys111, Cys115, and Cys118 each contribute to the [4Fe-4S] cluster site. S-adenosyl-L-methionine is bound by residues 165-166, Ser197, 219-221, and Asn301; these read GE and SLH. Catalysis depends on Cys344, which acts as the S-methylcysteine intermediate.

It belongs to the radical SAM superfamily. RlmN family. Requires [4Fe-4S] cluster as cofactor.

It is found in the cytoplasm. It carries out the reaction adenosine(2503) in 23S rRNA + 2 reduced [2Fe-2S]-[ferredoxin] + 2 S-adenosyl-L-methionine = 2-methyladenosine(2503) in 23S rRNA + 5'-deoxyadenosine + L-methionine + 2 oxidized [2Fe-2S]-[ferredoxin] + S-adenosyl-L-homocysteine. The enzyme catalyses adenosine(37) in tRNA + 2 reduced [2Fe-2S]-[ferredoxin] + 2 S-adenosyl-L-methionine = 2-methyladenosine(37) in tRNA + 5'-deoxyadenosine + L-methionine + 2 oxidized [2Fe-2S]-[ferredoxin] + S-adenosyl-L-homocysteine. Functionally, specifically methylates position 2 of adenine 2503 in 23S rRNA and position 2 of adenine 37 in tRNAs. m2A2503 modification seems to play a crucial role in the proofreading step occurring at the peptidyl transferase center and thus would serve to optimize ribosomal fidelity. This Polaromonas naphthalenivorans (strain CJ2) protein is Dual-specificity RNA methyltransferase RlmN.